The primary structure comprises 394 residues: 4-O-methyl-glucuronoyl methylesterase (394 aa).

An N-terminal signal peptide occupies residues 1-18 (MVHLTPALLLASAAFAAA). Intrachain disulfides connect cysteine 29-cysteine 63, cysteine 210-cysteine 345, and cysteine 242-cysteine 317. The GXSYXG catalytic site motif motif lies at 209-214 (GCSRNG). Serine 211 acts as the Nucleophile in catalysis. Positions 215, 257, 265, and 308 each coordinate substrate. The active-site Proton donor/acceptor is the histidine 344.

The protein belongs to the carbohydrate esterase 15 (CE15) family.

It localises to the secreted. It carries out the reaction a 4-O-methyl-alpha-D-glucuronosyl ester derivative + H2O = 4-O-methyl-alpha-D-glucuronate derivative + an alcohol + H(+). Functionally, glucuronoyl esterase which may play a significant role in biomass degradation, as it is considered to disconnect hemicellulose from lignin through the hydrolysis of the ester bond between 4-O-methyl-D-glucuronic acid residues of glucuronoxylans and aromatic alcohols of lignin. This is 4-O-methyl-glucuronoyl methylesterase from Neurospora crassa (strain ATCC 24698 / 74-OR23-1A / CBS 708.71 / DSM 1257 / FGSC 987).